Consider the following 529-residue polypeptide: Structure-specific endonuclease subunit SLX1 homolog 1 (529 aa).

The GIY-YIG domain occupies 4–89 (RFHCVYLLTS…PTKSTRLKTQ (86 aa)). An SLX1-type zinc finger spans residues 231–364 (CALCSLPLRS…PCQPCPCPLC (134 aa)). Disordered stretches follow at residues 275–305 (VTMG…MDAH), 409–437 (NSSL…YCGD), and 470–501 (SVSL…RMTD). The segment covering 282–297 (RNERSGEYSNKIKDDS) has biased composition (basic and acidic residues).

This sequence belongs to the SLX1 family. As to quaternary structure, forms a heterodimer with a member of the SLX4 family. It depends on a divalent metal cation as a cofactor.

The protein resides in the nucleus. Catalytic subunit of a heterodimeric structure-specific endonuclease that resolves DNA secondary structures generated during DNA repair and recombination. Has endonuclease activity towards branched DNA substrates, introducing single-strand cuts in duplex DNA close to junctions with ss-DNA. The polypeptide is Structure-specific endonuclease subunit SLX1 homolog 1 (Trypanosoma cruzi (strain CL Brener)).